Here is a 473-residue protein sequence, read N- to C-terminus: Serine palmitoyltransferase 1 (473 aa).

Topologically, residues 1-15 (MATVAEQWVLVEMVQ) are lumenal. Residues 1–66 (MATVAEQWVL…KEELIEEWQP (66 aa)) form an interaction with SPTLC2 region. The helical transmembrane segment at 16–36 (ALYEAPAYHLILEGILILWII) threads the bilayer. Residues 37–473 (RLLFSKTYKL…ISEVAQTVLL (437 aa)) are Cytoplasmic-facing. A Phosphotyrosine; by ABL modification is found at Y164.

It belongs to the class-II pyridoxal-phosphate-dependent aminotransferase family. As to quaternary structure, component of the serine palmitoyltransferase (SPT) complex, which is also composed of SPTLC2 or SPTLC3 and SPTSSA or SPTSSB. The heterodimer with SPTLC2 or SPTLC3 forms the catalytic core of the enzyme, while SPTSSA or SPTSSB subunits determine substrate specificity. SPT also interacts with ORMDL proteins, especially ORMDL3, which negatively regulate SPT activity in the presence of ceramides. Forms dimers of heterodimers with SPTLC2. Interacts with RTN4. Pyridoxal 5'-phosphate is required as a cofactor. Post-translationally, phosphorylation at Tyr-164 inhibits activity and promotes cell survival.

It localises to the endoplasmic reticulum membrane. It catalyses the reaction L-serine + hexadecanoyl-CoA + H(+) = 3-oxosphinganine + CO2 + CoA. The enzyme catalyses octadecanoyl-CoA + L-serine + H(+) = 3-oxoeicosasphinganine + CO2 + CoA. The catalysed reaction is tetradecanoyl-CoA + L-serine + H(+) = 3-oxohexadecasphinganine + CO2 + CoA. It carries out the reaction dodecanoyl-CoA + L-serine + H(+) = 3-oxotetradecasphinganine + CO2 + CoA. It participates in lipid metabolism; sphingolipid metabolism. With respect to regulation, SPT complex catalytic activity is negatively regulated by ORMDL proteins, including ORMDL3, in the presence of ceramides. This mechanism allows to maintain ceramide levels at sufficient concentrations for the production of complex sphingolipids, but which prevents the accumulation of ceramides to levels that trigger apoptosis. Component of the serine palmitoyltransferase multisubunit enzyme (SPT) that catalyzes the initial and rate-limiting step in sphingolipid biosynthesis by condensing L-serine and activated acyl-CoA (most commonly palmitoyl-CoA) to form long-chain bases. The SPT complex is also composed of SPTLC2 or SPTLC3 and SPTSSA or SPTSSB. Within this complex, the heterodimer with SPTLC2 or SPTLC3 forms the catalytic core. The composition of the serine palmitoyltransferase (SPT) complex determines the substrate preference. The SPTLC1-SPTLC2-SPTSSA complex shows a strong preference for C16-CoA substrate, while the SPTLC1-SPTLC3-SPTSSA isozyme uses both C14-CoA and C16-CoA as substrates, with a slight preference for C14-CoA. The SPTLC1-SPTLC2-SPTSSB complex shows a strong preference for C18-CoA substrate, while the SPTLC1-SPTLC3-SPTSSB isozyme displays an ability to use a broader range of acyl-CoAs, without apparent preference. Required for adipocyte cell viability and metabolic homeostasis. The chain is Serine palmitoyltransferase 1 (SPTLC1) from Bos taurus (Bovine).